We begin with the raw amino-acid sequence, 1461 residues long: Gag-Pol polyprotein (1461 aa).

Gly2 carries N-myristoyl glycine; by host lipidation. An interaction with Gp41 region spans residues 7–31; sequence VLRGKKADELEKIRLRPGGKKKYKL. The Nuclear export signal motif lies at 16 to 22; that stretch reads LEKIRLR. A Nuclear localization signal motif is present at residues 26–32; it reads KKKYKLK. The tract at residues 189 to 226 is interaction with human PPIA/CYPA and NUP153; it reads NCVGDHQAAMQIIREIINEEAADWDVAHPIPGPLPAGQ. The interval 277 to 363 is dimerization/Multimerization of capsid protein p24; it reads YNPTNILDIN…GGPGQKARLM (87 aa). 2 CCHC-type zinc fingers span residues 387–404 and 408–425; these read FKCW…QWSA and QGCW…NCPD. The interval 436 to 467 is disordered; it reads LGKEGPQLPRGPSPAGANTNSTPIGSSSGPTG. The segment covering 453–467 has biased composition (low complexity); the sequence is NTNSTPIGSSSGPTG. The interval 511-515 is dimerization of protease; sequence PQFSL. A Peptidase A2 domain is found at 530 to 599; it reads VEVLLDTRAN…TPINIFGRNV (70 aa). Asp535 functions as the For protease activity; shared with dimeric partner in the catalytic mechanism. Dimerization of protease regions lie at residues 559–565 and 598–610; these read GIGGFIN and NVLT…LNLP. One can recognise a Reverse transcriptase domain in the interval 653 to 843; that stretch reads EGQLEEAPPT…PPYRWMGYEL (191 aa). Residues Asp719, Asp794, and Asp795 each coordinate Mg(2+). The tract at residues 836-844 is RT 'primer grip'; sequence YRWMGYELW. The short motif at 1006-1022 is the Tryptophan repeat motif element; it reads WEQWWDNYWQVTWIPDW. Residues 1042–1165 form the RNase H type-1 domain; sequence VPGAETFYTD…VDHLVSQGIR (124 aa). Mg(2+) is bound by residues Asp1051, Glu1086, Asp1106, and Asp1157. The Integrase-type; degenerate zinc-finger motif lies at 1171–1212; it reads EKIEPAQEEHEKYHSNIKELSHKFGIPKLVARQIVNTCAHVQ. The Integrase catalytic domain maps to 1221–1372; that stretch reads QVNAELGTWQ…TPAERIINMI (152 aa). Asp1232, Asp1284, and Glu1320 together coordinate Mg(2+). A DNA-binding region (integrase-type) is located at residues 1391–1438; it reads FRVYFREGRDQLWKGPGELLWKGDGAVIVKVGTEIKVVPRRKAKIIKD.

In terms of assembly, homotrimer; further assembles as hexamers of trimers. Interacts with gp41 (via C-terminus). Interacts with host CALM1; this interaction induces a conformational change in the Matrix protein, triggering exposure of the myristate group. Interacts with host AP3D1; this interaction allows the polyprotein trafficking to multivesicular bodies during virus assembly. Part of the pre-integration complex (PIC) which is composed of viral genome, matrix protein, Vpr and integrase. Homodimer; the homodimer further multimerizes as homohexamers or homopentamers. Interacts with human PPIA/CYPA. Interacts with human NUP153. Interacts with host PDZD8; this interaction stabilizes the capsid. Interacts with monkey TRIM5; this interaction destabilizes the capsid. As to quaternary structure, homodimer, whose active site consists of two apposed aspartic acid residues. In terms of assembly, heterodimer of p66 RT and p51 RT (RT p66/p51). Heterodimerization of RT is essential for DNA polymerase activity. The overall folding of the subdomains is similar in p66 RT and p51 RT but the spatial arrangements of the subdomains are dramatically different. Homotetramer; may further associate as a homohexadecamer. Part of the pre-integration complex (PIC) which is composed of viral genome, matrix protein, Vpr and integrase. Interacts with human SMARCB1/INI1 and human PSIP1/LEDGF isoform 1. Interacts with human KPNA3; this interaction might play a role in nuclear import of the pre-integration complex. Interacts with human NUP153; this interaction might play a role in nuclear import of the pre-integration complex. It depends on Mg(2+) as a cofactor. Specific enzymatic cleavages by the viral protease yield mature proteins. The protease is released by autocatalytic cleavage. The polyprotein is cleaved during and after budding, this process is termed maturation. Proteolytic cleavage of p66 RT removes the RNase H domain to yield the p51 RT subunit. Nucleocapsid protein p7 might be further cleaved after virus entry.

It is found in the host cell membrane. It localises to the host endosome. The protein localises to the host multivesicular body. The protein resides in the virion membrane. Its subcellular location is the host nucleus. It is found in the host cytoplasm. It localises to the virion. The catalysed reaction is Endopeptidase for which the P1 residue is preferably hydrophobic.. It carries out the reaction Endohydrolysis of RNA in RNA/DNA hybrids. Three different cleavage modes: 1. sequence-specific internal cleavage of RNA. Human immunodeficiency virus type 1 and Moloney murine leukemia virus enzymes prefer to cleave the RNA strand one nucleotide away from the RNA-DNA junction. 2. RNA 5'-end directed cleavage 13-19 nucleotides from the RNA end. 3. DNA 3'-end directed cleavage 15-20 nucleotides away from the primer terminus.. It catalyses the reaction 3'-end directed exonucleolytic cleavage of viral RNA-DNA hybrid.. The enzyme catalyses DNA(n) + a 2'-deoxyribonucleoside 5'-triphosphate = DNA(n+1) + diphosphate. Protease: The viral protease is inhibited by many synthetic protease inhibitors (PIs), such as amprenavir, atazanavir, indinavir, loprinavir, nelfinavir, ritonavir and saquinavir. Use of protease inhibitors in tritherapy regimens permit more ambitious therapeutic strategies. Reverse transcriptase/ribonuclease H: RT can be inhibited either by nucleoside RT inhibitors (NRTIs) or by non nucleoside RT inhibitors (NNRTIs). NRTIs act as chain terminators, whereas NNRTIs inhibit DNA polymerization by binding a small hydrophobic pocket near the RT active site and inducing an allosteric change in this region. Classical NRTIs are abacavir, adefovir (PMEA), didanosine (ddI), lamivudine (3TC), stavudine (d4T), tenofovir (PMPA), zalcitabine (ddC), and zidovudine (AZT). Classical NNRTIs are atevirdine (BHAP U-87201E), delavirdine, efavirenz (DMP-266), emivirine (I-EBU), and nevirapine (BI-RG-587). The tritherapies used as a basic effective treatment of AIDS associate two NRTIs and one NNRTI. Its function is as follows. Mediates, with Gag polyprotein, the essential events in virion assembly, including binding the plasma membrane, making the protein-protein interactions necessary to create spherical particles, recruiting the viral Env proteins, and packaging the genomic RNA via direct interactions with the RNA packaging sequence (Psi). Gag-Pol polyprotein may regulate its own translation, by the binding genomic RNA in the 5'-UTR. At low concentration, the polyprotein would promote translation, whereas at high concentration, the polyprotein would encapsidate genomic RNA and then shut off translation. Targets the polyprotein to the plasma membrane via a multipartite membrane-binding signal, that includes its myristoylated N-terminus. Matrix protein is part of the pre-integration complex. Implicated in the release from host cell mediated by Vpu. Binds to RNA. In terms of biological role, forms the conical core that encapsulates the genomic RNA-nucleocapsid complex in the virion. Most core are conical, with only 7% tubular. The core is constituted by capsid protein hexamer subunits. The core is disassembled soon after virion entry. Host restriction factors such as TRIM5-alpha or TRIMCyp bind retroviral capsids and cause premature capsid disassembly, leading to blocks in reverse transcription. Capsid restriction by TRIM5 is one of the factors which restricts HIV-1 to the human species. Host PIN1 apparently facilitates the virion uncoating. On the other hand, interactions with PDZD8 or CYPA stabilize the capsid. Functionally, encapsulates and protects viral dimeric unspliced genomic RNA (gRNA). Binds these RNAs through its zinc fingers. Acts as a nucleic acid chaperone which is involved in rearangement of nucleic acid secondary structure during gRNA retrotranscription. Also facilitates template switch leading to recombination. As part of the polyprotein, participates in gRNA dimerization, packaging, tRNA incorporation and virion assembly. Its function is as follows. Aspartyl protease that mediates proteolytic cleavages of Gag and Gag-Pol polyproteins during or shortly after the release of the virion from the plasma membrane. Cleavages take place as an ordered, step-wise cascade to yield mature proteins. This process is called maturation. Displays maximal activity during the budding process just prior to particle release from the cell. Also cleaves Nef and Vif, probably concomitantly with viral structural proteins on maturation of virus particles. Hydrolyzes host EIF4GI and PABP1 in order to shut off the capped cellular mRNA translation. The resulting inhibition of cellular protein synthesis serves to ensure maximal viral gene expression and to evade host immune response. Multifunctional enzyme that converts the viral RNA genome into dsDNA in the cytoplasm, shortly after virus entry into the cell. This enzyme displays a DNA polymerase activity that can copy either DNA or RNA templates, and a ribonuclease H (RNase H) activity that cleaves the RNA strand of RNA-DNA heteroduplexes in a partially processive 3' to 5' endonucleasic mode. Conversion of viral genomic RNA into dsDNA requires many steps. A tRNA(3)-Lys binds to the primer-binding site (PBS) situated at the 5'-end of the viral RNA. RT uses the 3' end of the tRNA primer to perform a short round of RNA-dependent minus-strand DNA synthesis. The reading proceeds through the U5 region and ends after the repeated (R) region which is present at both ends of viral RNA. The portion of the RNA-DNA heteroduplex is digested by the RNase H, resulting in a ssDNA product attached to the tRNA primer. This ssDNA/tRNA hybridizes with the identical R region situated at the 3' end of viral RNA. This template exchange, known as minus-strand DNA strong stop transfer, can be either intra- or intermolecular. RT uses the 3' end of this newly synthesized short ssDNA to perform the RNA-dependent minus-strand DNA synthesis of the whole template. RNase H digests the RNA template except for two polypurine tracts (PPTs) situated at the 5'-end and near the center of the genome. It is not clear if both polymerase and RNase H activities are simultaneous. RNase H probably can proceed both in a polymerase-dependent (RNA cut into small fragments by the same RT performing DNA synthesis) and a polymerase-independent mode (cleavage of remaining RNA fragments by free RTs). Secondly, RT performs DNA-directed plus-strand DNA synthesis using the PPTs that have not been removed by RNase H as primers. PPTs and tRNA primers are then removed by RNase H. The 3' and 5' ssDNA PBS regions hybridize to form a circular dsDNA intermediate. Strand displacement synthesis by RT to the PBS and PPT ends produces a blunt ended, linear dsDNA copy of the viral genome that includes long terminal repeats (LTRs) at both ends. In terms of biological role, catalyzes viral DNA integration into the host chromosome, by performing a series of DNA cutting and joining reactions. This enzyme activity takes place after virion entry into a cell and reverse transcription of the RNA genome in dsDNA. The first step in the integration process is 3' processing. This step requires a complex comprising the viral genome, matrix protein, Vpr and integrase. This complex is called the pre-integration complex (PIC). The integrase protein removes 2 nucleotides from each 3' end of the viral DNA, leaving recessed CA OH's at the 3' ends. In the second step, the PIC enters cell nucleus. This process is mediated through integrase and Vpr proteins, and allows the virus to infect a non dividing cell. This ability to enter the nucleus is specific of lentiviruses, other retroviruses cannot and rely on cell division to access cell chromosomes. In the third step, termed strand transfer, the integrase protein joins the previously processed 3' ends to the 5' ends of strands of target cellular DNA at the site of integration. The 5'-ends are produced by integrase-catalyzed staggered cuts, 5 bp apart. A Y-shaped, gapped, recombination intermediate results, with the 5'-ends of the viral DNA strands and the 3' ends of target DNA strands remaining unjoined, flanking a gap of 5 bp. The last step is viral DNA integration into host chromosome. This involves host DNA repair synthesis in which the 5 bp gaps between the unjoined strands are filled in and then ligated. Since this process occurs at both cuts flanking the HIV genome, a 5 bp duplication of host DNA is produced at the ends of HIV-1 integration. Alternatively, Integrase may catalyze the excision of viral DNA just after strand transfer, this is termed disintegration. In Homo sapiens (Human), this protein is Gag-Pol polyprotein (gag-pol).